The primary structure comprises 598 residues: mRNA-capping enzyme (598 aa).

Residues 1–215 are TPase; that stretch reads MSQTGAPPRW…GSASAPASEP (215 aa). The 159-residue stretch at 25–183 folds into the Tyrosine-protein phosphatase domain; sequence LPMKTMLGPR…FRRYGDVEDA (159 aa). Catalysis depends on cysteine 126, which acts as the Phosphocysteine intermediate. Residues 186 to 227 are disordered; it reads APPLPEWCFDEDEEEDGEEDGSASAPASEPSSSHTGQSKKKK. Residues 193–206 are compositionally biased toward acidic residues; it reads CFDEDEEEDGEEDG. Residues 207–218 are compositionally biased toward low complexity; sequence SASAPASEPSSS. The GTase stretch occupies residues 233–598; sequence GAVFLEGVSV…PKRSANSIPQ (366 aa). Residue lysine 298 is the N6-GMP-lysine intermediate of the active site. Residues arginine 303, arginine 319, 347–349, 462–464, and 532–537 contribute to the GTP site; these read DGE, KWK, and RQRVDK. Residues 575 to 598 form a disordered region; it reads RKNPADSDLMPPPPPKRSANSIPQ.

This sequence in the N-terminal section; belongs to the non-receptor class of the protein-tyrosine phosphatase family. The protein in the C-terminal section; belongs to the eukaryotic GTase family.

It is found in the nucleus. It catalyses the reaction a 5'-end triphospho-ribonucleoside in mRNA + H2O = a 5'-end diphospho-ribonucleoside in mRNA + phosphate + H(+). The enzyme catalyses a 5'-end diphospho-ribonucleoside in mRNA + GTP + H(+) = a 5'-end (5'-triphosphoguanosine)-ribonucleoside in mRNA + diphosphate. In terms of biological role, bifunctional mRNA-capping enzyme exhibiting RNA 5'-triphosphate monophosphatase activity in the N-terminal part and mRNA guanylyltransferase activity in the C-terminal part. Catalyzes the first two steps of cap formation: by removing the gamma-phosphate from the 5'-triphosphate end of nascent mRNA to yield a diphosphate end, and by transferring the GMP moiety of GTP to the 5'-diphosphate terminus of RNA via a covalent enzyme-GMP reaction intermediate. This chain is mRNA-capping enzyme (rngtt), found in Danio rerio (Zebrafish).